The chain runs to 284 residues: Bifunctional protein FolD 1 (284 aa).

NADP(+)-binding positions include 164 to 166, serine 189, and isoleucine 230; that span reads GRS.

The protein belongs to the tetrahydrofolate dehydrogenase/cyclohydrolase family. In terms of assembly, homodimer.

The catalysed reaction is (6R)-5,10-methylene-5,6,7,8-tetrahydrofolate + NADP(+) = (6R)-5,10-methenyltetrahydrofolate + NADPH. It carries out the reaction (6R)-5,10-methenyltetrahydrofolate + H2O = (6R)-10-formyltetrahydrofolate + H(+). The protein operates within one-carbon metabolism; tetrahydrofolate interconversion. Catalyzes the oxidation of 5,10-methylenetetrahydrofolate to 5,10-methenyltetrahydrofolate and then the hydrolysis of 5,10-methenyltetrahydrofolate to 10-formyltetrahydrofolate. In Rubrobacter xylanophilus (strain DSM 9941 / JCM 11954 / NBRC 16129 / PRD-1), this protein is Bifunctional protein FolD 1.